Consider the following 516-residue polypeptide: Histidine ammonia-lyase (516 aa).

The 5-imidazolinone (Ala-Gly) cross-link spans 143 to 145 (ASG). Residue S144 is modified to 2,3-didehydroalanine (Ser).

It belongs to the PAL/histidase family. Post-translationally, contains an active site 4-methylidene-imidazol-5-one (MIO), which is formed autocatalytically by cyclization and dehydration of residues Ala-Ser-Gly.

It is found in the cytoplasm. It catalyses the reaction L-histidine = trans-urocanate + NH4(+). The protein operates within amino-acid degradation; L-histidine degradation into L-glutamate; N-formimidoyl-L-glutamate from L-histidine: step 1/3. In Koribacter versatilis (strain Ellin345), this protein is Histidine ammonia-lyase.